The chain runs to 237 residues: Proteasome subunit beta type-1-B (237 aa).

Belongs to the peptidase T1B family. In terms of assembly, the 26S proteasome consists of a 20S proteasome core and two 19S regulatory subunits. The 20S proteasome core is composed of 28 subunits that are arranged in four stacked rings, resulting in a barrel-shaped structure. The two end rings are each formed by seven alpha subunits, and the two central rings are each formed by seven beta subunits. The catalytic chamber with the active sites is on the inside of the barrel.

It localises to the cytoplasm. The protein resides in the nucleus. Its function is as follows. Non-catalytic component of the proteasome, a multicatalytic proteinase complex which is characterized by its ability to cleave peptides with Arg, Phe, Tyr, Leu, and Glu adjacent to the leaving group at neutral or slightly basic pH. The proteasome has an ATP-dependent proteolytic activity. In Carassius auratus (Goldfish), this protein is Proteasome subunit beta type-1-B (psmb1-B).